The primary structure comprises 281 residues: MFKRFVLSLAFLIMAAVVSFQVIFTVPEHPQIITQTGSEITEDIRCIEFSGAKALDDNGELNLLVWNIYKQNRANWQSELELFSADKQLLLLQEASMTDSFKQWLVDGSWVSNQVSAFKALGSGAGVISIAQKQPIKACAYTSKEPWLRLPKSALYSQYRLSNGESLAVINVHAINFTVGTEEYTSQLSALETLLKQHSGPIVFAGDFNSWSEYRITAMKQALREANLREVQFSPDHRTQFITGLPLDHVFYRGLTLKNAKAPQSDASDHNPLLVSFTLND.

The protein belongs to the UPF0294 family.

Its subcellular location is the cytoplasm. The protein is UPF0294 protein VP2298 of Vibrio parahaemolyticus serotype O3:K6 (strain RIMD 2210633).